The chain runs to 521 residues: Protein nucleotidyltransferase YdiU (521 aa).

Residues Gly109, Gly111, Arg112, Lys131, Asp143, Gly144, Arg194, and Arg201 each coordinate ATP. The Proton acceptor role is filled by Asp270. Residues Asn271 and Asp280 each coordinate Mg(2+). Asp280 is a binding site for ATP.

This sequence belongs to the SELO family. It depends on Mg(2+) as a cofactor. Mn(2+) is required as a cofactor.

It carries out the reaction L-seryl-[protein] + ATP = 3-O-(5'-adenylyl)-L-seryl-[protein] + diphosphate. It catalyses the reaction L-threonyl-[protein] + ATP = 3-O-(5'-adenylyl)-L-threonyl-[protein] + diphosphate. The enzyme catalyses L-tyrosyl-[protein] + ATP = O-(5'-adenylyl)-L-tyrosyl-[protein] + diphosphate. The catalysed reaction is L-histidyl-[protein] + UTP = N(tele)-(5'-uridylyl)-L-histidyl-[protein] + diphosphate. It carries out the reaction L-seryl-[protein] + UTP = O-(5'-uridylyl)-L-seryl-[protein] + diphosphate. It catalyses the reaction L-tyrosyl-[protein] + UTP = O-(5'-uridylyl)-L-tyrosyl-[protein] + diphosphate. In terms of biological role, nucleotidyltransferase involved in the post-translational modification of proteins. It can catalyze the addition of adenosine monophosphate (AMP) or uridine monophosphate (UMP) to a protein, resulting in modifications known as AMPylation and UMPylation. The chain is Protein nucleotidyltransferase YdiU from Burkholderia thailandensis (strain ATCC 700388 / DSM 13276 / CCUG 48851 / CIP 106301 / E264).